A 500-amino-acid chain; its full sequence is Probable malate:quinone oxidoreductase (500 aa).

The protein belongs to the MQO family. It depends on FAD as a cofactor.

It catalyses the reaction (S)-malate + a quinone = a quinol + oxaloacetate. It functions in the pathway carbohydrate metabolism; tricarboxylic acid cycle; oxaloacetate from (S)-malate (quinone route): step 1/1. The sequence is that of Probable malate:quinone oxidoreductase from Bordetella avium (strain 197N).